The primary structure comprises 249 residues: ATP synthase subunit a, chloroplastic (249 aa).

A run of 5 helical transmembrane segments spans residues 40–60, 97–117, 136–156, 201–221, and 222–242; these read QVLI…IVAV, VPFI…GALL, INTT…AGLS, LVVV…VMFL, and GLFT…AYIG.

Belongs to the ATPase A chain family. F-type ATPases have 2 components, CF(1) - the catalytic core - and CF(0) - the membrane proton channel. CF(1) has five subunits: alpha(3), beta(3), gamma(1), delta(1), epsilon(1). CF(0) has four main subunits: a, b, b' and c.

Its subcellular location is the plastid. It localises to the chloroplast thylakoid membrane. Key component of the proton channel; it plays a direct role in the translocation of protons across the membrane. The polypeptide is ATP synthase subunit a, chloroplastic (Manihot esculenta (Cassava)).